The sequence spans 294 residues: tRNA pseudouridine synthase B (294 aa).

The active-site Nucleophile is the Asp38.

Belongs to the pseudouridine synthase TruB family. Type 1 subfamily.

It catalyses the reaction uridine(55) in tRNA = pseudouridine(55) in tRNA. Responsible for synthesis of pseudouridine from uracil-55 in the psi GC loop of transfer RNAs. This chain is tRNA pseudouridine synthase B, found in Clostridium perfringens (strain ATCC 13124 / DSM 756 / JCM 1290 / NCIMB 6125 / NCTC 8237 / Type A).